Here is a 253-residue protein sequence, read N- to C-terminus: Discoidin-1 subunit A (253 aa).

At Ser-2 the chain carries N-acetylserine. One can recognise an F5/8 type C domain in the interval 2–152 (STQGLVQLLA…ISLRCEFYTQ (151 aa)). The short motif at 79 to 81 (RGD) is the Cell attachment site element.

Tetramer of four different chains (A to D). In terms of tissue distribution, stalk cells.

It is found in the cytoplasm. Functionally, galactose- and N-acetylgalactosamine-binding lectin. May play a role in cell-substratum adhesion rather than in cell-cell adhesion. May be necessary for the maintenance of normal elongate morphology during aggregation. The protein is Discoidin-1 subunit A (dscA-1) of Dictyostelium discoideum (Social amoeba).